The chain runs to 236 residues: Probable metal transport system ATP-binding protein CT_416 (236 aa).

The region spanning 5–236 (MLLENVSFRY…FCCNTFGRCP (232 aa)) is the ABC transporter domain. 39-46 (GPNGGGKT) is an ATP binding site.

This sequence belongs to the ABC transporter superfamily.

It localises to the cell inner membrane. In terms of biological role, part of an ATP-driven transport system CT_415/CT_416/CT_417 for a metal. Probably responsible for energy coupling to the transport system. The polypeptide is Probable metal transport system ATP-binding protein CT_416 (Chlamydia trachomatis serovar D (strain ATCC VR-885 / DSM 19411 / UW-3/Cx)).